A 597-amino-acid chain; its full sequence is Elongation factor 4 (597 aa).

The tr-type G domain maps to 2–184 (DHIRNFSIIA…ALVAKVPPPK (183 aa)). GTP-binding positions include 14–19 (DHGKST) and 131–134 (NKID).

Belongs to the TRAFAC class translation factor GTPase superfamily. Classic translation factor GTPase family. LepA subfamily.

The protein localises to the cell inner membrane. It carries out the reaction GTP + H2O = GDP + phosphate + H(+). Its function is as follows. Required for accurate and efficient protein synthesis under certain stress conditions. May act as a fidelity factor of the translation reaction, by catalyzing a one-codon backward translocation of tRNAs on improperly translocated ribosomes. Back-translocation proceeds from a post-translocation (POST) complex to a pre-translocation (PRE) complex, thus giving elongation factor G a second chance to translocate the tRNAs correctly. Binds to ribosomes in a GTP-dependent manner. The sequence is that of Elongation factor 4 from Paraburkholderia xenovorans (strain LB400).